Here is a 393-residue protein sequence, read N- to C-terminus: Ribonucleoside-diphosphate reductase subunit M2 (393 aa).

S18 carries the post-translational modification Phosphoserine. Residues D142, E173, and H176 each coordinate Fe cation. The active site involves Y180. E236, E270, and H273 together coordinate Fe cation.

It belongs to the ribonucleoside diphosphate reductase small chain family. As to quaternary structure, heterodimer of a large and a small subunit. The cofactor is Fe cation.

It localises to the cytoplasm. It catalyses the reaction a 2'-deoxyribonucleoside 5'-diphosphate + [thioredoxin]-disulfide + H2O = a ribonucleoside 5'-diphosphate + [thioredoxin]-dithiol. Its function is as follows. Provides the precursors necessary for DNA synthesis. Catalyzes the biosynthesis of deoxyribonucleotides from the corresponding ribonucleotides. The chain is Ribonucleoside-diphosphate reductase subunit M2 (RnrS) from Drosophila melanogaster (Fruit fly).